The sequence spans 662 residues: Zinc finger protein 800 (662 aa).

The C2H2-type 1; degenerate zinc finger occupies 69–91 (FECKLCRSLFRGLPNLITHKKFY). A Glycyl lysine isopeptide (Lys-Gly) (interchain with G-Cter in SUMO2) cross-link involves residue K132. 2 disordered regions span residues 172 to 197 (ETSS…PPSI) and 205 to 224 (AAPT…TSDS). Positions 205 to 216 (AAPTEEQPQESQ) are enriched in low complexity. The C2H2-type 2 zinc finger occupies 231–254 (LICCLCRKEFNSRRGVRRHIRKVH). K280 participates in a covalent cross-link: Glycyl lysine isopeptide (Lys-Gly) (interchain with G-Cter in SUMO2). The C2H2-type 3 zinc-finger motif lies at 288-311 (RSCPVCCKSFATKANVRRHFDEVH). S318 is modified (phosphoserine). The tract at residues 319–349 (ITPDIATKPGQPLFLDSASPKKSFKTRKQKS) is disordered. T320 is subject to Phosphothreonine. S337 carries the post-translational modification Phosphoserine. Positions 340–349 (KSFKTRKQKS) are enriched in basic residues. The C2H2-type 4 zinc-finger motif lies at 357–382 (TACKCLLCKRKYSSQIMLKRHMQIVH). The disordered stretch occupies residues 389–473 (ANSKREKGPN…AGGQQKTRKP (85 aa)). A Glycyl lysine isopeptide (Lys-Gly) (interchain with G-Cter in SUMO2) cross-link involves residue K392. A compositionally biased stretch (polar residues) spans 414–434 (VESSPPSITHSPQNELKGTNH). S420, S424, S453, S455, S458, and S460 each carry phosphoserine. Over residues 456–468 (PKSASPSAAGGQQ) the composition is skewed to low complexity. Residue K474 forms a Glycyl lysine isopeptide (Lys-Gly) (interchain with G-Cter in SUMO2) linkage. C2H2-type zinc fingers lie at residues 484–506 (LYCK…IELH) and 517–540 (YKCP…TVVH). 2 disordered regions span residues 573–597 (RGPS…PSKK) and 633–662 (HHKK…KALV). Positions 575–587 (PSREEAKHNDSKQ) are enriched in basic and acidic residues. Residue K597 forms a Glycyl lysine isopeptide (Lys-Gly) (interchain with G-Cter in SUMO2) linkage. The segment at 616-638 (HRCNKCGKAFAKKTYLEHHKKTH) adopts a C2H2-type 7 zinc-finger fold. Basic residues predominate over residues 651–662 (TKGRSTRSKALV).

It belongs to the krueppel C2H2-type zinc-finger protein family.

The protein resides in the nucleus. May be involved in transcriptional regulation. This chain is Zinc finger protein 800 (Znf800), found in Mus musculus (Mouse).